The following is a 602-amino-acid chain: Baseplate wedge protein gp10 (602 aa).

Positions 501-512 (LNNNDLDSGGNP) are enriched in polar residues. Residues 501–523 (LNNNDLDSGGNPSHTAGGTGGST) form a disordered region.

This sequence belongs to the T4likevirus baseplate wedge protein gp10 family. Homotrimer; disulfide-linked. Heteromultimer with gp7; a gp10 molecule is disulfide-linked to gp7 and the other two remaining gp10 molecules form a disulfide bond. The gp10 trimer interacts with gp11 trimer and with the short tail fiber (STF) composed of the gp12 trimer. Part of the baseplate macromolecular complex which consists of gp5, gp5.4, gp27 (central spike complex); gp6, gp25, gp53 (inner baseplate); gp7, gp8 (intermediate baseplate); gp9, gp10, gp11, gp12 (peripheral); gp48 and gp54 (proximal region of the tail tube).

The protein resides in the virion. Functionally, peripheral baseplate protein that is part of the tail fiber network. Connects the short tail fibers to the baseplate. During infection, the baseplate undergoes a conformational change from a dome-shaped to a star-shaped structure. At this point, gp10 rotates and acts as a lever that unfolds the short tail fibers, which then interact with host cell surface receptors. Involved in the tail assembly. The chain is Baseplate wedge protein gp10 (10) from Escherichia coli (Bacteriophage T4).